The following is a 625-amino-acid chain: Chaperone protein HtpG (625 aa).

The a; substrate-binding stretch occupies residues 1-341; sequence MEKKQFQAES…SEDLSLNISR (341 aa). The b stretch occupies residues 342–551; sequence EMLQHDRQLK…DGEITLEMEK (210 aa). Residues 552-625 are c; that stretch reads VLQAMPDNQN…FSQNMCKVMV (74 aa).

The protein belongs to the heat shock protein 90 family. In terms of assembly, homodimer.

Its subcellular location is the cytoplasm. Functionally, molecular chaperone. Has ATPase activity. This is Chaperone protein HtpG from Shouchella clausii (strain KSM-K16) (Alkalihalobacillus clausii).